The primary structure comprises 238 residues: Ribonuclease PH (238 aa).

Residues R86 and 124–126 (GTR) each bind phosphate.

The protein belongs to the RNase PH family. In terms of assembly, homohexameric ring arranged as a trimer of dimers.

The catalysed reaction is tRNA(n+1) + phosphate = tRNA(n) + a ribonucleoside 5'-diphosphate. Its function is as follows. Phosphorolytic 3'-5' exoribonuclease that plays an important role in tRNA 3'-end maturation. Removes nucleotide residues following the 3'-CCA terminus of tRNAs; can also add nucleotides to the ends of RNA molecules by using nucleoside diphosphates as substrates, but this may not be physiologically important. Probably plays a role in initiation of 16S rRNA degradation (leading to ribosome degradation) during starvation. The protein is Ribonuclease PH of Yersinia enterocolitica serotype O:8 / biotype 1B (strain NCTC 13174 / 8081).